Consider the following 328-residue polypeptide: DNA-directed RNA polymerase subunit alpha (328 aa).

Positions 1–230 (MSNHGLQMPE…DHVSFFIQLE (230 aa)) are alpha N-terminal domain (alpha-NTD). The interval 248 to 328 (RIRELLAQPV…EEYLEEKKAS (81 aa)) is alpha C-terminal domain (alpha-CTD).

It belongs to the RNA polymerase alpha chain family. Homodimer. The RNAP catalytic core consists of 2 alpha, 1 beta, 1 beta' and 1 omega subunit. When a sigma factor is associated with the core the holoenzyme is formed, which can initiate transcription.

It carries out the reaction RNA(n) + a ribonucleoside 5'-triphosphate = RNA(n+1) + diphosphate. In terms of biological role, DNA-dependent RNA polymerase catalyzes the transcription of DNA into RNA using the four ribonucleoside triphosphates as substrates. This chain is DNA-directed RNA polymerase subunit alpha, found in Salinibacter ruber (strain DSM 13855 / M31).